The primary structure comprises 442 residues: Endothelin receptor type B (442 aa).

The first 26 residues, 1-26 (MQPPPSLCGRALVALVLACGLSRIWG), serve as a signal peptide directing secretion. Residues 27–101 (EERGFPPDRA…GSIEIKETFK (75 aa)) are Extracellular-facing. An N-linked (GlcNAc...) asparagine glycan is attached at Asn59. The interval 69–88 (AEVPKGDRTAGSPPRTISPP) is disordered. The helical transmembrane segment at 102 to 126 (YINTVVSCLVFVLGIIGNSTLLRII) threads the bilayer. Residues 127–137 (YKNKCMRNGPN) lie on the Cytoplasmic side of the membrane. A helical membrane pass occupies residues 138-163 (ILIASLALGDLLHIIIDIPITVYKLL). At 164–175 (AEDWPFGVEMCK) the chain is on the extracellular side. An intrachain disulfide couples Cys174 to Cys255. The helical transmembrane segment at 176–197 (LVPFIQKASVGITVLSLCALSI) threads the bilayer. The Cytoplasmic portion of the chain corresponds to 198–218 (DRYRAVASWSRIKGIGVPKWT). The helical transmembrane segment at 219 to 243 (AVEIVLIWVVSVVLAVPEAVGFDMI) threads the bilayer. At 244–271 (TIDYKGRYLRICLLHPTQKTAFMQFYKT) the chain is on the extracellular side. The helical transmembrane segment at 272-296 (AKDWWLFSFYFCLPLAITAFFYTLM) threads the bilayer. Residues 297–324 (TCEMLRKKSGMQIALNDHLKQRREVAKT) are Cytoplasmic-facing. Ser305 carries the post-translational modification Phosphoserine. Residues 325-350 (VFCLVLVFALCWLPLHLSRILKLTIY) form a helical membrane-spanning segment. The Extracellular portion of the chain corresponds to 351–362 (DQNDPNRCELLS). A helical membrane pass occupies residues 363–389 (FLLVLDYIGINMASLNSCINPIALYLV). The Cytoplasmic segment spans residues 390–442 (SKRFKNCFKSCLCCWCQSFEEKQSLEEKQSCLKFKANDHGYDNFRSSNKYSSS). 3 S-palmitoyl cysteine lipidation sites follow: Cys402, Cys403, and Cys405. The residue at position 419 (Ser419) is a Phosphoserine. Phosphotyrosine is present on Tyr439. 3 positions are modified to phosphoserine: Ser440, Ser441, and Ser442.

Belongs to the G-protein coupled receptor 1 family. Endothelin receptor subfamily. EDNRB sub-subfamily.

Its subcellular location is the cell membrane. In terms of biological role, non-specific receptor for endothelin 1, 2, and 3. Mediates its action by association with G proteins that activate a phosphatidylinositol-calcium second messenger system. The protein is Endothelin receptor type B (EDNRB) of Canis lupus familiaris (Dog).